A 447-amino-acid polypeptide reads, in one-letter code: Tol-Pal system protein TolB (447 aa).

A signal peptide spans 1 to 29 (MITMSRIRSLAAFAVFVILGVAAVLPAQA).

Belongs to the TolB family. The Tol-Pal system is composed of five core proteins: the inner membrane proteins TolA, TolQ and TolR, the periplasmic protein TolB and the outer membrane protein Pal. They form a network linking the inner and outer membranes and the peptidoglycan layer.

The protein localises to the periplasm. Its function is as follows. Part of the Tol-Pal system, which plays a role in outer membrane invagination during cell division and is important for maintaining outer membrane integrity. This Paramagnetospirillum magneticum (strain ATCC 700264 / AMB-1) (Magnetospirillum magneticum) protein is Tol-Pal system protein TolB.